The chain runs to 215 residues: MHDEEKKEPKWVTAVSIAGRIAGMGLAVAAAVLMSTASQCTVYYAAPAASAYGGAARARTVTYSDFPPFVFLVGAASIAAFLEAIAIFLVVWKKGKDKTTKVLMPLLGVAVPALLYSATGAAFAAVSDMSYCSANGKRVSICAGSAAAGGGVSGGTNFCSQVHIAVYLSLAAAVAVSVAEVVRGLGGSASGGGSDSDSSSSSESGGCDHGCHHKH.

The Cytoplasmic portion of the chain corresponds to 1 to 13 (MHDEEKKEPKWVT). Residues 14-34 (AVSIAGRIAGMGLAVAAAVLM) form a helical membrane-spanning segment. Over 35 to 68 (STASQCTVYYAAPAASAYGGAARARTVTYSDFPP) the chain is Extracellular. Residues 69–89 (FVFLVGAASIAAFLEAIAIFL) form a helical membrane-spanning segment. Residues 90-105 (VVWKKGKDKTTKVLMP) lie on the Cytoplasmic side of the membrane. The chain crosses the membrane as a helical span at residues 106–126 (LLGVAVPALLYSATGAAFAAV). Residues 127–161 (SDMSYCSANGKRVSICAGSAAAGGGVSGGTNFCSQ) lie on the Extracellular side of the membrane. A helical transmembrane segment spans residues 162 to 182 (VHIAVYLSLAAAVAVSVAEVV). Over 183 to 215 (RGLGGSASGGGSDSDSSSSSESGGCDHGCHHKH) the chain is Cytoplasmic. The tract at residues 187-215 (GSASGGGSDSDSSSSSESGGCDHGCHHKH) is disordered. The span at 195–205 (DSDSSSSSESG) shows a compositional bias: low complexity.

This sequence belongs to the Casparian strip membrane proteins (CASP) family. As to quaternary structure, homodimer and heterodimers.

It localises to the cell membrane. The chain is CASP-like protein 1U3 from Sorghum bicolor (Sorghum).